We begin with the raw amino-acid sequence, 456 residues long: Phosphomethylpyrimidine synthase (456 aa).

Substrate-binding positions include N80, M109, Y139, H175, 195 to 197, 236 to 239, and E275; these read SRG and DSLR. H279 provides a ligand contact to Zn(2+). Substrate is bound at residue Y302. Residue H343 participates in Zn(2+) binding. The [4Fe-4S] cluster site is built by C423, C426, and C431.

It belongs to the ThiC family. It depends on [4Fe-4S] cluster as a cofactor.

The catalysed reaction is 5-amino-1-(5-phospho-beta-D-ribosyl)imidazole + S-adenosyl-L-methionine = 4-amino-2-methyl-5-(phosphooxymethyl)pyrimidine + CO + 5'-deoxyadenosine + formate + L-methionine + 3 H(+). Its pathway is cofactor biosynthesis; thiamine diphosphate biosynthesis. In terms of biological role, catalyzes the synthesis of the hydroxymethylpyrimidine phosphate (HMP-P) moiety of thiamine from aminoimidazole ribotide (AIR) in a radical S-adenosyl-L-methionine (SAM)-dependent reaction. The sequence is that of Phosphomethylpyrimidine synthase from Prochlorococcus marinus (strain MIT 9301).